The sequence spans 144 residues: Large ribosomal subunit protein uL13 (144 aa).

This sequence belongs to the universal ribosomal protein uL13 family. As to quaternary structure, part of the 50S ribosomal subunit.

In terms of biological role, this protein is one of the early assembly proteins of the 50S ribosomal subunit, although it is not seen to bind rRNA by itself. It is important during the early stages of 50S assembly. This is Large ribosomal subunit protein uL13 from Lachnoclostridium phytofermentans (strain ATCC 700394 / DSM 18823 / ISDg) (Clostridium phytofermentans).